The primary structure comprises 98 residues: NADH-ubiquinone oxidoreductase chain 4L (98 aa).

The next 3 helical transmembrane spans lie at 1 to 21, 29 to 49, and 59 to 79; these read MSLVYMNIMTAFMVALAGLLM, SLLCLEGMMLSLFVMASLTIL, and MPIILLVFAACEAALGLSLLV.

This sequence belongs to the complex I subunit 4L family. As to quaternary structure, core subunit of respiratory chain NADH dehydrogenase (Complex I) which is composed of 45 different subunits.

It is found in the mitochondrion inner membrane. It carries out the reaction a ubiquinone + NADH + 5 H(+)(in) = a ubiquinol + NAD(+) + 4 H(+)(out). Its function is as follows. Core subunit of the mitochondrial membrane respiratory chain NADH dehydrogenase (Complex I) which catalyzes electron transfer from NADH through the respiratory chain, using ubiquinone as an electron acceptor. Part of the enzyme membrane arm which is embedded in the lipid bilayer and involved in proton translocation. The chain is NADH-ubiquinone oxidoreductase chain 4L (MT-ND4L) from Cervus elaphus (Red deer).